Consider the following 508-residue polypeptide: Maturase K (508 aa).

This sequence belongs to the intron maturase 2 family. MatK subfamily.

Its subcellular location is the plastid. The protein resides in the chloroplast. In terms of biological role, usually encoded in the trnK tRNA gene intron. Probably assists in splicing its own and other chloroplast group II introns. The chain is Maturase K from Ranunculus trichophyllus (Whitewater crowfoot).